A 638-amino-acid polypeptide reads, in one-letter code: 1-deoxy-D-xylulose-5-phosphate synthase (638 aa).

Residues histidine 79 and 120–122 contribute to the thiamine diphosphate site; that span reads GHS. Position 151 (aspartate 151) interacts with Mg(2+). Thiamine diphosphate-binding positions include 152–153, asparagine 182, tyrosine 291, and glutamate 373; that span reads GA. Position 182 (asparagine 182) interacts with Mg(2+).

This sequence belongs to the transketolase family. DXPS subfamily. In terms of assembly, homodimer. Requires Mg(2+) as cofactor. The cofactor is thiamine diphosphate.

It carries out the reaction D-glyceraldehyde 3-phosphate + pyruvate + H(+) = 1-deoxy-D-xylulose 5-phosphate + CO2. It functions in the pathway metabolic intermediate biosynthesis; 1-deoxy-D-xylulose 5-phosphate biosynthesis; 1-deoxy-D-xylulose 5-phosphate from D-glyceraldehyde 3-phosphate and pyruvate: step 1/1. Its function is as follows. Catalyzes the acyloin condensation reaction between C atoms 2 and 3 of pyruvate and glyceraldehyde 3-phosphate to yield 1-deoxy-D-xylulose-5-phosphate (DXP). This is 1-deoxy-D-xylulose-5-phosphate synthase from Xanthomonas euvesicatoria pv. vesicatoria (strain 85-10) (Xanthomonas campestris pv. vesicatoria).